We begin with the raw amino-acid sequence, 328 residues long: tRNA dimethylallyltransferase (328 aa).

Position 10–17 (10–17 (GPTASGKT)) interacts with ATP. 12–17 (TASGKT) is a binding site for substrate.

Belongs to the IPP transferase family. In terms of assembly, monomer. Requires Mg(2+) as cofactor.

It catalyses the reaction adenosine(37) in tRNA + dimethylallyl diphosphate = N(6)-dimethylallyladenosine(37) in tRNA + diphosphate. In terms of biological role, catalyzes the transfer of a dimethylallyl group onto the adenine at position 37 in tRNAs that read codons beginning with uridine, leading to the formation of N6-(dimethylallyl)adenosine (i(6)A). The polypeptide is tRNA dimethylallyltransferase (Bifidobacterium longum (strain NCC 2705)).